A 228-amino-acid chain; its full sequence is Deoxyguanosine kinase (228 aa).

8-16 (GPIGAGKSS) serves as a coordination point for ATP. Substrate contacts are provided by E32, Y44, and Q55. D78 serves as the catalytic Proton acceptor. 3 residues coordinate substrate: R79, D84, and E149.

Belongs to the DCK/DGK family. In terms of assembly, heterodimer of a deoxyadenosine (DAK) and a deoxyguanosine kinase (DGK).

The catalysed reaction is 2'-deoxyguanosine + ATP = dGMP + ADP + H(+). DGK/DAK plays an essential role in generating the deoxyribonucleotide precursors, dGTP and dATP, for DNA metabolism. The chain is Deoxyguanosine kinase from Lactobacillus acidophilus (strain ATCC 700396 / NCK56 / N2 / NCFM).